The primary structure comprises 103 residues: MSSQSHWLTAEERTQVLLDLKASGWSESGERDAIYKEFNFKNFNQAFGFMTRVALQAENMNHHPEWFNVYSKVQITLISHDCGGLTKRDVKLAQFIDKAAASV.

This sequence belongs to the pterin-4-alpha-carbinolamine dehydratase family. As to expression, highest level found in the kidney, liver, heart and ovarian follicles.

It carries out the reaction (4aS,6R)-4a-hydroxy-L-erythro-5,6,7,8-tetrahydrobiopterin = (6R)-L-erythro-6,7-dihydrobiopterin + H2O. In terms of biological role, involved in tetrahydrobiopterin biosynthesis. Seems to both prevent the formation of 7-pterins and accelerate the formation of quinonoid-BH2. Regulates the dimerization of homeodomain protein HNF-1-alpha and enhances its transcriptional activity. In Gallus gallus (Chicken), this protein is Pterin-4-alpha-carbinolamine dehydratase 2 (PCBD2).